Reading from the N-terminus, the 145-residue chain is Large ribosomal subunit protein uL11 (145 aa).

It belongs to the universal ribosomal protein uL11 family. In terms of assembly, part of the ribosomal stalk of the 50S ribosomal subunit. Interacts with L10 and the large rRNA to form the base of the stalk. L10 forms an elongated spine to which L12 dimers bind in a sequential fashion forming a multimeric L10(L12)X complex. One or more lysine residues are methylated.

Functionally, forms part of the ribosomal stalk which helps the ribosome interact with GTP-bound translation factors. The polypeptide is Large ribosomal subunit protein uL11 (Sulfurihydrogenibium sp. (strain YO3AOP1)).